The sequence spans 477 residues: Ribulose bisphosphate carboxylase large chain (477 aa).

The propeptide occupies 1 to 2 (MS). Residue Pro3 is modified to N-acetylproline. An N6,N6,N6-trimethyllysine modification is found at Lys14. Substrate contacts are provided by Asn123 and Thr173. Lys175 functions as the Proton acceptor in the catalytic mechanism. Lys177 contributes to the substrate binding site. 3 residues coordinate Mg(2+): Lys201, Asp203, and Glu204. Lys201 is modified (N6-carboxylysine). His294 acts as the Proton acceptor in catalysis. Positions 295, 327, and 379 each coordinate substrate.

Belongs to the RuBisCO large chain family. Type I subfamily. As to quaternary structure, heterohexadecamer of 8 large chains and 8 small chains; disulfide-linked. The disulfide link is formed within the large subunit homodimers. Mg(2+) serves as cofactor. Post-translationally, the disulfide bond which can form in the large chain dimeric partners within the hexadecamer appears to be associated with oxidative stress and protein turnover.

Its subcellular location is the plastid. The protein localises to the chloroplast. The catalysed reaction is 2 (2R)-3-phosphoglycerate + 2 H(+) = D-ribulose 1,5-bisphosphate + CO2 + H2O. The enzyme catalyses D-ribulose 1,5-bisphosphate + O2 = 2-phosphoglycolate + (2R)-3-phosphoglycerate + 2 H(+). RuBisCO catalyzes two reactions: the carboxylation of D-ribulose 1,5-bisphosphate, the primary event in carbon dioxide fixation, as well as the oxidative fragmentation of the pentose substrate in the photorespiration process. Both reactions occur simultaneously and in competition at the same active site. The chain is Ribulose bisphosphate carboxylase large chain from Digitalis purpurea (Common foxglove).